The following is a 520-amino-acid chain: Peptidoglycan-recognition protein LC (520 aa).

Composition is skewed to polar residues over residues 1–14 and 27–36; these read MPFSNETEMSQCSN and KNCSTSSTDS. Disordered stretches follow at residues 1-78 and 239-278; these read MPFS…RISV and DKWKPGEGPAGGQDNPAFNGGPSTNGSAPGSKHEDPAQTP. Residues 1-291 lie on the Cytoplasmic side of the membrane; it reads MPFSNETEMS…PFLPNTVGRK (291 aa). Basic and acidic residues-rich tracts occupy residues 48-58 and 66-78; these read RPEKETKDRGT and KSEEKTESKRISV. A helical; Signal-anchor for type II membrane protein transmembrane segment spans residues 292–312; it reads AVTVTVVFVTLTFLLGIVLAT. Topologically, residues 313–520 are extracellular; it reads TTNLFGKTLN…ASFANWTHWS (208 aa). N-linked (GlcNAc...) asparagine glycosylation is present at Asn389. Cys390 and Cys396 are joined by a disulfide. The 79-residue stretch at 412–490 folds into the N-acetylmuramoyl-L-alanine amidase domain; sequence QKCDIAYNFL…KLGKIAPSYR (79 aa). N-linked (GlcNAc...) asparagine glycosylation is present at Asn515.

Belongs to the N-acetylmuramoyl-L-alanine amidase 2 family. Post-translationally, proteolytically cleaved, probably by a metaloprotease such as Mmp2; proteolytic cleavage leads to activation of the imd/Relish signaling pathway. As to expression, expressed in the fat body and hemocytes.

The protein localises to the membrane. Its activity is regulated as follows. Activated by proteolytic cleavage in response to Gram-negative bacterial infection; cleavage may be mediated by endogenous proteases, such as the metalloprotease Mmp2 or elastase, or by bacterially expressed proteases such as the surface serine protease OmpT. Its function is as follows. Major activator of the imd/Relish pathway and is likely to encode a pattern recognition molecule for the humoral immune response. Required for Relish processing and nuclear translocation following proteolytic cleavage. Involved in the response to lipopolysaccharide (LPS) and peptidoglycan of Gram-negative bacteria. The different isoforms probably display different recognition capabilities to various microbial patterns. In terms of biological role, mediates the response to LPS and Gram-negative bacteria. Functionally, mediates the response to LPS, peptidoglycan and Gram-negative bacteria. The sequence is that of Peptidoglycan-recognition protein LC (PGRP-LC) from Drosophila melanogaster (Fruit fly).